A 445-amino-acid chain; its full sequence is MKNIIRTPETHPLTWRLRDDKQPVWLDEYRSKNGYEGARKALTGLSPDEIVNQVKDAGLKGRGGAGFSTGLKWSLMPKDESMNIRYLLCNADEMEPGTYKDRLLMEQLPHLLVEGMLISAFALKAYRGYIFLRGEYIEAAVNLRRAIAEATEAGLLGKNIMGTGFDFELFVHTGAGRYICGEETALINSLEGRRANPRSKPPFPATSGAWGKPTCVNNVETLCNVPAILANGVEWYQNISKSKDAGTKLMGFSGRVKNPGLWELPFGTTAREILEDYAGGMRDGLKFKAWQPGGAGTDFLTEAHLDLPMEFESIGKAGSRLGTALAMAVDHEINMVSLVRNLEEFFARESCGWCTPCRDGLPWSVKILRALERGEGQPGDIETLEQLCRFLGPGKTFCAHAPGAVEPLQSAIKYFREEFEAGIKQPFSNTHLINGIQPNLLKERW.

Residue 61–70 (GRGGAGFSTG) coordinates NAD(+). Residue 174–221 (GAGRYICGEETALINSLEGRRANPRSKPPFPATSGAWGKPTCVNNVET) participates in FMN binding. [4Fe-4S] cluster contacts are provided by cysteine 351, cysteine 354, cysteine 357, and cysteine 398.

This sequence belongs to the complex I 51 kDa subunit family. In terms of assembly, composed of 13 different subunits. Subunits NuoCD, E, F, and G constitute the peripheral sector of the complex. FMN serves as cofactor. The cofactor is [4Fe-4S] cluster.

The enzyme catalyses a quinone + NADH + 5 H(+)(in) = a quinol + NAD(+) + 4 H(+)(out). Functionally, NDH-1 shuttles electrons from NADH, via FMN and iron-sulfur (Fe-S) centers, to quinones in the respiratory chain. The immediate electron acceptor for the enzyme in this species is believed to be ubiquinone. Couples the redox reaction to proton translocation (for every two electrons transferred, four hydrogen ions are translocated across the cytoplasmic membrane), and thus conserves the redox energy in a proton gradient. The polypeptide is NADH-quinone oxidoreductase subunit F (nuoF) (Escherichia coli (strain K12)).